The chain runs to 363 residues: Ribosomal RNA large subunit methyltransferase M (363 aa).

S-adenosyl-L-methionine contacts are provided by residues Ser194, 227 to 230 (CPGG), Asp246, Asp266, and Asp284. Residue Lys313 is the Proton acceptor of the active site.

This sequence belongs to the class I-like SAM-binding methyltransferase superfamily. RNA methyltransferase RlmE family. RlmM subfamily. As to quaternary structure, monomer.

Its subcellular location is the cytoplasm. The catalysed reaction is cytidine(2498) in 23S rRNA + S-adenosyl-L-methionine = 2'-O-methylcytidine(2498) in 23S rRNA + S-adenosyl-L-homocysteine + H(+). Functionally, catalyzes the 2'-O-methylation at nucleotide C2498 in 23S rRNA. The sequence is that of Ribosomal RNA large subunit methyltransferase M from Mannheimia succiniciproducens (strain KCTC 0769BP / MBEL55E).